The sequence spans 206 residues: Recombination protein RecR (206 aa).

The C4-type zinc finger occupies 58 to 73; sequence CENCHNISDVAVCEIC. The Toprim domain occupies 81–176; it reads QIVCVVEDVR…ITSSIARGIS (96 aa).

Belongs to the RecR family.

In terms of biological role, may play a role in DNA repair. It seems to be involved in an RecBC-independent recombinational process of DNA repair. It may act with RecF and RecO. The sequence is that of Recombination protein RecR from Flavobacterium psychrophilum (strain ATCC 49511 / DSM 21280 / CIP 103535 / JIP02/86).